Here is a 640-residue protein sequence, read N- to C-terminus: Paramyosin, short form (640 aa).

2 nonhelical region regions span residues 1 to 122 (MALA…PDTV) and 420 to 640 (KLEQ…TITE). Residues 123-619 (VERSRQRRRR…IIRAKHRTFV (497 aa)) adopt a coiled-coil conformation.

Belongs to the paramyosin family. Phosphorylated. As to expression, found in all adult muscle tissues except in indirect flight muscles and a set of temporary abdominal muscles. Not detected in larval muscle.

It localises to the cytoplasm. It is found in the myofibril. Its function is as follows. Paramyosin is a major structural component of many thick filaments isolated from invertebrate muscles. This chain is Paramyosin, short form (Prm), found in Drosophila melanogaster (Fruit fly).